Here is a 147-residue protein sequence, read N- to C-terminus: Small ribosomal subunit protein eS19 (147 aa).

The protein belongs to the eukaryotic ribosomal protein eS19 family. As to quaternary structure, component of the small ribosomal subunit.

The protein resides in the cytoplasm. The protein localises to the nucleus. Component of the small ribosomal subunit. The ribosome is a large ribonucleoprotein complex responsible for the synthesis of proteins in the cell. Required for pre-rRNA processing and maturation of 40S ribosomal subunits. The protein is Small ribosomal subunit protein eS19 (rps19) of Ictalurus punctatus (Channel catfish).